Reading from the N-terminus, the 233-residue chain is Orotidine 5'-phosphate decarboxylase (233 aa).

Substrate-binding positions include Asp-11, Lys-34, 61 to 70 (DLKLHDIPNT), Thr-117, Arg-179, Gln-188, Gly-208, and Arg-209. Catalysis depends on Lys-63, which acts as the Proton donor.

It belongs to the OMP decarboxylase family. Type 1 subfamily. As to quaternary structure, homodimer.

It carries out the reaction orotidine 5'-phosphate + H(+) = UMP + CO2. It participates in pyrimidine metabolism; UMP biosynthesis via de novo pathway; UMP from orotate: step 2/2. Functionally, catalyzes the decarboxylation of orotidine 5'-monophosphate (OMP) to uridine 5'-monophosphate (UMP). The sequence is that of Orotidine 5'-phosphate decarboxylase from Streptococcus pneumoniae (strain P1031).